The following is an 83-amino-acid chain: RNA-binding protein Hfq (83 aa).

The region spanning 9 to 68 (DPYLNALRKERIPVSIFLVNGIKLQGQIESFDQFVILLKNTVSQMVYKHAISTVVPARNV) is the Sm domain.

The protein belongs to the Hfq family. Homohexamer.

In terms of biological role, RNA chaperone that binds small regulatory RNA (sRNAs) and mRNAs to facilitate mRNA translational regulation in response to envelope stress, environmental stress and changes in metabolite concentrations. Also binds with high specificity to tRNAs. This chain is RNA-binding protein Hfq, found in Hahella chejuensis (strain KCTC 2396).